The sequence spans 225 residues: Small ribosomal subunit protein uS3 (225 aa).

A KH type-2 domain is found at leucine 38 to arginine 106.

This sequence belongs to the universal ribosomal protein uS3 family. In terms of assembly, part of the 30S ribosomal subunit. Forms a tight complex with proteins S10 and S14.

In terms of biological role, binds the lower part of the 30S subunit head. Binds mRNA in the 70S ribosome, positioning it for translation. The polypeptide is Small ribosomal subunit protein uS3 (Rhodospirillum centenum (strain ATCC 51521 / SW)).